We begin with the raw amino-acid sequence, 110 residues long: MALWMRLLPLLAFLILWEPSPAHAFVNQHLCGSHLVEALYLVCGERGFFYTPKFRRGVDDPQMPQLELGGSPGAGDLRALALEVARQKRGIVEQCCTGICSLYQLENYCN.

Positions 1–24 are cleaved as a signal peptide; the sequence is MALWMRLLPLLAFLILWEPSPAHA. Disulfide bonds link Cys31/Cys96, Cys43/Cys109, and Cys95/Cys100. Positions 57–87 are cleaved as a propeptide — c peptide; the sequence is GVDDPQMPQLELGGSPGAGDLRALALEVARQ.

Belongs to the insulin family. In terms of assembly, heterodimer of a B chain and an A chain linked by two disulfide bonds.

Its subcellular location is the secreted. Its function is as follows. Insulin decreases blood glucose concentration. It increases cell permeability to monosaccharides, amino acids and fatty acids. It accelerates glycolysis, the pentose phosphate cycle, and glycogen synthesis in liver. The polypeptide is Insulin (INS) (Psammomys obesus (Fat sand rat)).